Consider the following 912-residue polypeptide: Nitrate reductase [NADH] (912 aa).

Positions 1 to 99 are disordered; sequence SVEPRQPFGR…PRDEGTADAW (99 aa). Residues 13-23 are compositionally biased toward low complexity; it reads APATAPTARAP. Residues 54-68 are compositionally biased toward acidic residues; sequence AEEDEEDDDEDDEGH. Positions 85 to 94 are enriched in basic and acidic residues; it reads PSTRDPRDEG. Cys-186 serves as a coordination point for Mo-molybdopterin. Residues 535 to 610 form the Cytochrome b5 heme-binding domain; it reads DKQFTMSEVR…LDTYRIGELI (76 aa). Residues His-570 and His-593 each coordinate heme. Positions 651–764 constitute an FAD-binding FR-type domain; that stretch reads REKVPCRLVD…KGPLGHVEYT (114 aa). FAD is bound by residues 703–706, 720–724, Phe-725, Phe-732, 737–739, Ser-788, and Thr-791; these read RAYT, LVKVY, and LMT.

Belongs to the nitrate reductase family. As to quaternary structure, homodimer. The cofactor is FAD. It depends on heme as a cofactor. Mo-molybdopterin serves as cofactor.

The catalysed reaction is nitrite + NAD(+) + H2O = nitrate + NADH + H(+). Its function is as follows. Nitrate reductase is a key enzyme involved in the first step of nitrate assimilation in plants, fungi and bacteria. The protein is Nitrate reductase [NADH] of Hordeum vulgare (Barley).